Consider the following 329-residue polypeptide: Glycerol-3-phosphate dehydrogenase [NAD(P)+] (329 aa).

NADPH is bound by residues Ser10, Trp11, Arg31, and Lys105. Residues Lys105, Gly134, and Ser136 each coordinate sn-glycerol 3-phosphate. NADPH is bound at residue Ala138. Sn-glycerol 3-phosphate is bound by residues Lys189, Asp242, Ser252, Arg253, and Asn254. Lys189 (proton acceptor) is an active-site residue. Residue Arg253 coordinates NADPH. Residues Val277 and Glu279 each contribute to the NADPH site.

It belongs to the NAD-dependent glycerol-3-phosphate dehydrogenase family.

The protein localises to the cytoplasm. The catalysed reaction is sn-glycerol 3-phosphate + NAD(+) = dihydroxyacetone phosphate + NADH + H(+). The enzyme catalyses sn-glycerol 3-phosphate + NADP(+) = dihydroxyacetone phosphate + NADPH + H(+). It functions in the pathway membrane lipid metabolism; glycerophospholipid metabolism. Its function is as follows. Catalyzes the reduction of the glycolytic intermediate dihydroxyacetone phosphate (DHAP) to sn-glycerol 3-phosphate (G3P), the key precursor for phospholipid synthesis. This Neisseria meningitidis serogroup A / serotype 4A (strain DSM 15465 / Z2491) protein is Glycerol-3-phosphate dehydrogenase [NAD(P)+].